We begin with the raw amino-acid sequence, 510 residues long: Flavonoid 3',5'-hydroxylase (510 aa).

Residue C447 participates in heme binding.

The protein belongs to the cytochrome P450 family. Heme is required as a cofactor.

The catalysed reaction is a 3',5'-unsubstituted flavanone + 2 reduced [NADPH--hemoprotein reductase] + 2 O2 = a 3',5'-dihydroxyflavanone + 2 oxidized [NADPH--hemoprotein reductase] + 2 H2O + 2 H(+). The protein operates within pigment biosynthesis; anthocyanin biosynthesis. Its function is as follows. Catalyzes the 3'5'-hydroxylation of naringenin and eriodictyol to form 5,7,3,'4',5'-pentahydroxyflavanone and 3',5'-hydroxylation of dihydrokaempferol and dihydroquercetin to form dihydromyricetin. The protein is Flavonoid 3',5'-hydroxylase (CYP75A5) of Eustoma exaltatum subsp. russellianum (Bluebells).